Here is a 211-residue protein sequence, read N- to C-terminus: MTLELLKKYFPALTDDQISKFEKLEELYKDWNLKINVVSRKDIDELYLRHILHSLGIVKVQSFNPGSKILDVGTGGGFPGIPLAIMHPESAFHLVDSIGKKIKVVDEVSEGLGLENVTSFNQRVEELNGNYDFIVSRAVAVMPTFVRWVKGKIAKENVHERKNGILYLKGGDLSDELKDYRTAKIFELSDYFEEDFFQTKKVVYLPMKYKG.

S-adenosyl-L-methionine is bound by residues Gly73, Phe78, 124–125 (VE), and Arg137.

This sequence belongs to the methyltransferase superfamily. RNA methyltransferase RsmG family.

The protein resides in the cytoplasm. Its function is as follows. Specifically methylates the N7 position of a guanine in 16S rRNA. The chain is Ribosomal RNA small subunit methyltransferase G from Christiangramia forsetii (strain DSM 17595 / CGMCC 1.15422 / KT0803) (Gramella forsetii).